The following is a 138-amino-acid chain: Large ribosomal subunit protein uL16 (138 aa).

It belongs to the universal ribosomal protein uL16 family. Part of the 50S ribosomal subunit.

Binds 23S rRNA and is also seen to make contacts with the A and possibly P site tRNAs. The sequence is that of Large ribosomal subunit protein uL16 from Rhodospirillum rubrum (strain ATCC 11170 / ATH 1.1.1 / DSM 467 / LMG 4362 / NCIMB 8255 / S1).